The chain runs to 197 residues: Adenylate kinase (197 aa).

16–21 is an ATP binding site; that stretch reads GAGKGT. Residues 36-65 are NMP; it reads STGDILRDHVARGTALGQRVKPILDAGQLV. Residues Thr37, Arg42, 63 to 65, 90 to 93, and Gln97 each bind AMP; these read QLV and GFPR. Residues 131–147 form an LID region; sequence ERGRQAALRGEPVRSDD. Arg132 is an ATP binding site. Arg144 and Arg155 together coordinate AMP. Gly183 contacts ATP.

Belongs to the adenylate kinase family. Monomer.

The protein localises to the cytoplasm. It catalyses the reaction AMP + ATP = 2 ADP. Its pathway is purine metabolism; AMP biosynthesis via salvage pathway; AMP from ADP: step 1/1. In terms of biological role, catalyzes the reversible transfer of the terminal phosphate group between ATP and AMP. Plays an important role in cellular energy homeostasis and in adenine nucleotide metabolism. The sequence is that of Adenylate kinase from Deinococcus geothermalis (strain DSM 11300 / CIP 105573 / AG-3a).